Here is a 152-residue protein sequence, read N- to C-terminus: Large-conductance mechanosensitive channel (152 aa).

3 helical membrane passes run 14–34 (VVDM…VKSL), 39–59 (LMPG…FLVI), and 85–105 (GLFI…FLVI).

Belongs to the MscL family. Homopentamer.

It is found in the cell inner membrane. Channel that opens in response to stretch forces in the membrane lipid bilayer. May participate in the regulation of osmotic pressure changes within the cell. The polypeptide is Large-conductance mechanosensitive channel (Syntrophus aciditrophicus (strain SB)).